Consider the following 288-residue polypeptide: Elongation factor Ts (288 aa).

Positions 82–85 (TDFV) are involved in Mg(2+) ion dislocation from EF-Tu.

The protein belongs to the EF-Ts family.

The protein resides in the cytoplasm. In terms of biological role, associates with the EF-Tu.GDP complex and induces the exchange of GDP to GTP. It remains bound to the aminoacyl-tRNA.EF-Tu.GTP complex up to the GTP hydrolysis stage on the ribosome. The polypeptide is Elongation factor Ts (Chlorobaculum parvum (strain DSM 263 / NCIMB 8327) (Chlorobium vibrioforme subsp. thiosulfatophilum)).